Reading from the N-terminus, the 648-residue chain is Threonine--tRNA ligase (648 aa).

One can recognise a TGS domain in the interval Met1–Lys61. The catalytic stretch occupies residues Asp243–Pro542. The Zn(2+) site is built by Cys338, His389, and His519.

It belongs to the class-II aminoacyl-tRNA synthetase family. In terms of assembly, homodimer. Zn(2+) serves as cofactor.

The protein localises to the cytoplasm. It catalyses the reaction tRNA(Thr) + L-threonine + ATP = L-threonyl-tRNA(Thr) + AMP + diphosphate + H(+). Catalyzes the attachment of threonine to tRNA(Thr) in a two-step reaction: L-threonine is first activated by ATP to form Thr-AMP and then transferred to the acceptor end of tRNA(Thr). Also edits incorrectly charged L-seryl-tRNA(Thr). This Azobacteroides pseudotrichonymphae genomovar. CFP2 protein is Threonine--tRNA ligase.